Here is a 403-residue protein sequence, read N- to C-terminus: Homoserine O-succinyltransferase (403 aa).

The disordered stretch occupies residues 1–31 (MTELQVDPAASADPAAAADTPRHPAATLPPD). A compositionally biased stretch (low complexity) spans 7 to 26 (DPAASADPAAAADTPRHPAA). An AB hydrolase-1 domain is found at 74–383 (NAVLICHALN…HGHDAFLLED (310 aa)). Ser-178 (nucleophile) is an active-site residue. Arg-248 contacts substrate. Catalysis depends on residues Asp-343 and His-376. Substrate is bound at residue Asp-377.

The protein belongs to the AB hydrolase superfamily. MetX family. In terms of assembly, homodimer.

It is found in the cytoplasm. The enzyme catalyses L-homoserine + succinyl-CoA = O-succinyl-L-homoserine + CoA. It functions in the pathway amino-acid biosynthesis; L-methionine biosynthesis via de novo pathway; O-succinyl-L-homoserine from L-homoserine: step 1/1. In terms of biological role, transfers a succinyl group from succinyl-CoA to L-homoserine, forming succinyl-L-homoserine. The protein is Homoserine O-succinyltransferase of Ralstonia nicotianae (strain ATCC BAA-1114 / GMI1000) (Ralstonia solanacearum).